A 403-amino-acid chain; its full sequence is S-adenosylmethionine synthase (403 aa).

H15 serves as a coordination point for ATP. D17 contacts Mg(2+). E43 serves as a coordination point for K(+). E56 and Q99 together coordinate L-methionine. A flexible loop region spans residues 99-109 (QSPDINQGVDR). Residues 166-168 (DAK), 232-233 (KF), D241, 247-248 (RK), A264, and K268 contribute to the ATP site. D241 provides a ligand contact to L-methionine. L-methionine is bound at residue K272.

Belongs to the AdoMet synthase family. As to quaternary structure, homotetramer; dimer of dimers. Mg(2+) is required as a cofactor. The cofactor is K(+).

Its subcellular location is the cytoplasm. The catalysed reaction is L-methionine + ATP + H2O = S-adenosyl-L-methionine + phosphate + diphosphate. It functions in the pathway amino-acid biosynthesis; S-adenosyl-L-methionine biosynthesis; S-adenosyl-L-methionine from L-methionine: step 1/1. Functionally, catalyzes the formation of S-adenosylmethionine (AdoMet) from methionine and ATP. The overall synthetic reaction is composed of two sequential steps, AdoMet formation and the subsequent tripolyphosphate hydrolysis which occurs prior to release of AdoMet from the enzyme. The sequence is that of S-adenosylmethionine synthase from Xanthomonas axonopodis pv. citri (strain 306).